The following is a 529-amino-acid chain: Peptide chain release factor 3 (529 aa).

Residues 11–280 (AKRRTFAIIS…GLVEWAPAPM (270 aa)) form the tr-type G domain. GTP is bound by residues 20–27 (SHPDAGKT), 88–92 (DTPGH), and 142–145 (NKLD).

Belongs to the TRAFAC class translation factor GTPase superfamily. Classic translation factor GTPase family. PrfC subfamily.

Its subcellular location is the cytoplasm. Increases the formation of ribosomal termination complexes and stimulates activities of RF-1 and RF-2. It binds guanine nucleotides and has strong preference for UGA stop codons. It may interact directly with the ribosome. The stimulation of RF-1 and RF-2 is significantly reduced by GTP and GDP, but not by GMP. This is Peptide chain release factor 3 from Yersinia enterocolitica serotype O:8 / biotype 1B (strain NCTC 13174 / 8081).